The following is a 529-amino-acid chain: Hyaluronidase PH-20 (529 aa).

The signal sequence occupies residues 1 to 35; sequence MGAFTFKHSFFGSFVECSGVLQTVFIFLLIPCCLA. Disulfide bonds link C59-C351 and C223-C237. N81 carries N-linked (GlcNAc...) asparagine glycosylation. The Proton donor role is filled by E147. N-linked (GlcNAc...) asparagine glycosylation is found at N165 and N179. N-linked (GlcNAc...) asparagine glycans are attached at residues N253 and N368. Intrachain disulfides connect C376-C387, C381-C435, and C437-C464. N401 carries an N-linked (GlcNAc...) asparagine glycan. A disordered region spans residues 478–502; that stretch reads DEPPITDDTSQNQDSISDITSSAPP. The span at 487 to 502 shows a compositional bias: polar residues; that stretch reads SQNQDSISDITSSAPP. S492 carries the GPI-anchor amidated serine lipid modification. The propeptide at 493-529 is removed in mature form; that stretch reads ISDITSSAPPSSHILPKDLSWCLFLLSIFSQHWKYLL.

This sequence belongs to the glycosyl hydrolase 56 family. Post-translationally, endoproteolysis (toward the C-terminus producing two disulfide-linked fragments) could activate PH-20. In terms of tissue distribution, testis.

It is found in the cell membrane. It catalyses the reaction Random hydrolysis of (1-&gt;4)-linkages between N-acetyl-beta-D-glucosamine and D-glucuronate residues in hyaluronate.. Its function is as follows. Involved in sperm-egg adhesion. Upon fertilization sperm must first penetrate a layer of cumulus cells that surrounds the egg before reaching the zona pellucida. The cumulus cells are embedded in a matrix containing hyaluronic acid which is formed prior to ovulation. This protein aids in penetrating the layer of cumulus cells by digesting hyaluronic acid. In Cavia porcellus (Guinea pig), this protein is Hyaluronidase PH-20 (SPAM1).